Here is an 85-residue protein sequence, read N- to C-terminus: Large ribosomal subunit protein bL27 (85 aa).

A disordered region spans residues 1–21 (MAHKKGGGSTHNGRDSKPKML).

The protein belongs to the bacterial ribosomal protein bL27 family.

In Albidiferax ferrireducens (strain ATCC BAA-621 / DSM 15236 / T118) (Rhodoferax ferrireducens), this protein is Large ribosomal subunit protein bL27.